The sequence spans 245 residues: Pathogenesis-related thaumatin-like protein 3.6 (245 aa).

Residues 1–19 (GSIPFWIALIASFSVFLQG) form the signal peptide. 8 disulfide bridges follow: C33-C226, C74-C84, C89-C95, C142-C215, C148-C198, C156-C166, C170-C179, and C180-C185. Residue N90 is glycosylated (N-linked (GlcNAc...) asparagine). A glycan (N-linked (GlcNAc...) asparagine) is linked at N186.

It belongs to the thaumatin family. In terms of tissue distribution, mostly expressed in strobili, and, to a lower extent, in roots of seedlings and saplings.

May be involved in disease resistance. This is Pathogenesis-related thaumatin-like protein 3.6 from Cryptomeria japonica (Japanese cedar).